A 599-amino-acid chain; its full sequence is MKNIRNFSIIAHIDHGKSTLSDRLIQTCGGLSEREMAAQVLDSMDLERERGITIKAQSVTLDYKAPDGQVYQLNFIDTPGHVDFSYEVSRSLAACEGALLVVDAGQGVEAQTLANCYTAMEMDLEVVPVLNKIDLPAADPDRVAQEIEDIVGIDATDAVRCSAKTGVGVPDVLERLVRDIPPPEGDPAAPLQALIIDSWFDNYLGVVSLVRIKNGTLRKGDKIKVMSTGQLYNADRLGIFTPKRIDREVLNCGEVGWLVCAIKDIHGAPVGDTLTLARQPADKVLPGFKKVKPQVYAGLFPVSSDDYEAFRDALGKLSLNDASLFYEPESSTALGFGFRCGFLGLLHMEIIQERLEREYDLDLITTAPTVIYEVLTTDNTTVYVDSPSKLPPLNGINELREPVAECHMLLPQAYLGNVITLCIEKRGVQTNMVYHGSQVALTYEIPMVEVVLDFFDRLKSTSRGYASLDYGFKRFQNSDMVRVDVLINGERVDALALITHRDNAPYRGREFVDKLQELIPRQQFDIAIQAAIGNHIIARSTVKQLRKNVLAKCYGGDVSRKKKLLQKQKEGKKRMKQVGNVELPQEAFLAILHVGKDSK.

The tr-type G domain maps to 2–184; sequence KNIRNFSIIA…RLVRDIPPPE (183 aa). GTP is bound by residues 14-19 and 131-134; these read DHGKST and NKID.

It belongs to the TRAFAC class translation factor GTPase superfamily. Classic translation factor GTPase family. LepA subfamily.

The protein resides in the cell inner membrane. It carries out the reaction GTP + H2O = GDP + phosphate + H(+). In terms of biological role, required for accurate and efficient protein synthesis under certain stress conditions. May act as a fidelity factor of the translation reaction, by catalyzing a one-codon backward translocation of tRNAs on improperly translocated ribosomes. Back-translocation proceeds from a post-translocation (POST) complex to a pre-translocation (PRE) complex, thus giving elongation factor G a second chance to translocate the tRNAs correctly. Binds to ribosomes in a GTP-dependent manner. The sequence is that of Elongation factor 4 from Sodalis glossinidius (strain morsitans).